The chain runs to 461 residues: Serine carboxypeptidase-like 45 (461 aa).

Residues 1–24 (MSPLQWLTISFALIIFHSLTVSSS) form the signal peptide. 3 cysteine pairs are disulfide-bonded: C86-C340, C243-C261, and C286-C309. N-linked (GlcNAc...) asparagine glycosylation is present at N168. S177 is an active-site residue. A glycan (N-linked (GlcNAc...) asparagine) is linked at N244. Residues D377 and H434 contribute to the active site.

It belongs to the peptidase S10 family. Ubiquitous.

Its subcellular location is the secreted. Functionally, probable carboxypeptidase. This is Serine carboxypeptidase-like 45 (SCPL45) from Arabidopsis thaliana (Mouse-ear cress).